The following is a 587-amino-acid chain: Zinc finger protein 69 (587 aa).

The interval 42 to 128 is disordered; sequence NGTQQESLAD…TPGTTAAGSQ (87 aa). The KRAB domain maps to 76–147; the sequence is HDEATPGTPA…VDLSQEEWGQ (72 aa). 9 C2H2-type zinc fingers span residues 271–293, 299–321, 327–349, 355–377, 383–405, 411–433, 439–461, 467–489, and 495–517; these read HKKK…ILEQ, KPAR…CMRA, NVCE…HTGE, KECG…HTGE, EECG…HTGE, DKCQ…HSGE, SECG…HTGE, TSCC…HTGE, and KECG…HTGV. Residues 564–587 are disordered; that stretch reads SRHQKIHRRNTFRDDPGHENKRQL. The span at 574 to 587 shows a compositional bias: basic and acidic residues; it reads TFRDDPGHENKRQL.

This sequence belongs to the krueppel C2H2-type zinc-finger protein family.

It is found in the nucleus. Functionally, putative transcription factor that appears to regulate lipid metabolism. In Mus musculus (Mouse), this protein is Zinc finger protein 69.